The primary structure comprises 567 residues: Proline--tRNA ligase (567 aa).

It belongs to the class-II aminoacyl-tRNA synthetase family. ProS type 1 subfamily. In terms of assembly, homodimer.

It localises to the cytoplasm. It carries out the reaction tRNA(Pro) + L-proline + ATP = L-prolyl-tRNA(Pro) + AMP + diphosphate. In terms of biological role, catalyzes the attachment of proline to tRNA(Pro) in a two-step reaction: proline is first activated by ATP to form Pro-AMP and then transferred to the acceptor end of tRNA(Pro). As ProRS can inadvertently accommodate and process non-cognate amino acids such as alanine and cysteine, to avoid such errors it has two additional distinct editing activities against alanine. One activity is designated as 'pretransfer' editing and involves the tRNA(Pro)-independent hydrolysis of activated Ala-AMP. The other activity is designated 'posttransfer' editing and involves deacylation of mischarged Ala-tRNA(Pro). The misacylated Cys-tRNA(Pro) is not edited by ProRS. The polypeptide is Proline--tRNA ligase (Geobacillus kaustophilus (strain HTA426)).